The following is a 451-amino-acid chain: tRNA modification GTPase MnmE (451 aa).

Residues Arg28, Glu85, and Lys124 each contribute to the (6S)-5-formyl-5,6,7,8-tetrahydrofolate site. The 154-residue stretch at 220 to 373 (GLYTVLVGPP…LKTRLRTLLL (154 aa)) folds into the TrmE-type G domain. Asn230 serves as a coordination point for K(+). Residues 230 to 235 (NVGKSS), 249 to 255 (TDVPGTT), and 274 to 277 (DTAG) each bind GTP. Ser234 provides a ligand contact to Mg(2+). Residues Thr249, Val251, and Thr254 each contribute to the K(+) site. Thr255 serves as a coordination point for Mg(2+). Lys451 lines the (6S)-5-formyl-5,6,7,8-tetrahydrofolate pocket.

It belongs to the TRAFAC class TrmE-Era-EngA-EngB-Septin-like GTPase superfamily. TrmE GTPase family. As to quaternary structure, homodimer. Heterotetramer of two MnmE and two MnmG subunits. The cofactor is K(+).

Its subcellular location is the cytoplasm. In terms of biological role, exhibits a very high intrinsic GTPase hydrolysis rate. Involved in the addition of a carboxymethylaminomethyl (cmnm) group at the wobble position (U34) of certain tRNAs, forming tRNA-cmnm(5)s(2)U34. In Xylella fastidiosa (strain Temecula1 / ATCC 700964), this protein is tRNA modification GTPase MnmE.